The primary structure comprises 616 residues: MRDFLKLLKKHDELKIIDTPLEVDLEIAHLAYIEAKKPNGGKALLFTQPIRKEHDQIKTFGMPVLMNAFGSFKRLDLLLKTPIESLQQRMQAFLHFNAPKNFTEGLKVLKDLWDLRHIFPKKTTRPKDLIIKQDKEVNLLDLPVLKTWEKDGGAFITMGQVYTQSLDHQKKNLGMYRLQVYDKNHLGLHWQIHKDSQLFFHEYAKAKVKMPVSIAIGGDLLYTWCATAPLPYGIYELMLYGFMRGKKARVMPCLSNSLSVPSDCDIVIEGFVDCEKLELEGPFGDHTGYYTPIEPYPVLEVKTISYKKDSIYLATVVGKPPLEDKYMGYLTERLFLPLLQMNAPNLIEYYMPENGVFHNLILAKIHTRYNAHAKQVMHAFWGVGQMSFVKHAIFVNEDAPNLRDTNAIIEYILENFSKENALISQGVCDALDHASPEYAMGGKLGIDATSKSNTPYPTLLNDSALLALLQDKMQNIVLLKQYYPHTRNPICVISVEKKDKSVIELAKNLLGFEEHLRIVIFVEHASNDLNNPYMLLWRIVNNIDARRDILTSKHCFFIDATNKGVMDKHFREWPTETNCSMEVIENLKKKGLLKDFETLNQKFHLTHSFSTHKEDL.

This sequence belongs to the UbiD family.

This is an uncharacterized protein from Helicobacter pylori (strain ATCC 700392 / 26695) (Campylobacter pylori).